The chain runs to 299 residues: NAD kinase (299 aa).

The active-site Proton acceptor is the Asp-64. NAD(+) contacts are provided by residues Asp-64–Gly-65, Asn-138–Asp-139, Arg-149, Arg-166, Asp-168, Thr-179–Ser-184, and Gln-238.

This sequence belongs to the NAD kinase family. It depends on a divalent metal cation as a cofactor.

The protein resides in the cytoplasm. The enzyme catalyses NAD(+) + ATP = ADP + NADP(+) + H(+). In terms of biological role, involved in the regulation of the intracellular balance of NAD and NADP, and is a key enzyme in the biosynthesis of NADP. Catalyzes specifically the phosphorylation on 2'-hydroxyl of the adenosine moiety of NAD to yield NADP. This is NAD kinase from Nitratidesulfovibrio vulgaris (strain ATCC 29579 / DSM 644 / CCUG 34227 / NCIMB 8303 / VKM B-1760 / Hildenborough) (Desulfovibrio vulgaris).